The sequence spans 280 residues: 2-dehydro-3-deoxyphosphooctonate aldolase (280 aa).

It belongs to the KdsA family.

The protein localises to the cytoplasm. The catalysed reaction is D-arabinose 5-phosphate + phosphoenolpyruvate + H2O = 3-deoxy-alpha-D-manno-2-octulosonate-8-phosphate + phosphate. It functions in the pathway carbohydrate biosynthesis; 3-deoxy-D-manno-octulosonate biosynthesis; 3-deoxy-D-manno-octulosonate from D-ribulose 5-phosphate: step 2/3. Its pathway is bacterial outer membrane biogenesis; lipopolysaccharide biosynthesis. The protein is 2-dehydro-3-deoxyphosphooctonate aldolase of Thiobacillus denitrificans (strain ATCC 25259 / T1).